The chain runs to 161 residues: Nucleotide-binding protein Csal_2524 (161 aa).

The protein belongs to the YajQ family.

Nucleotide-binding protein. The protein is Nucleotide-binding protein Csal_2524 of Chromohalobacter salexigens (strain ATCC BAA-138 / DSM 3043 / CIP 106854 / NCIMB 13768 / 1H11).